Consider the following 259-residue polypeptide: MSKPLILVCNDDGIFSVGIRTLIEVMSELGEVVVVAPDSPQSGMGHAITIGNTLRLEASDLFPGIVAYECSGTPADCVKLAKHHVLKGRKPDLVVSGINHGSNSSISVLYSGTMSAAIEAALEGLPAIGFSLCDYNAHADFSHVKAFVKQIASEVLTNGIAKGITLNVNFPAVINAPLKGIKICRQAHARWEEKFDERFDPYGRRYFWMAGSFENKDAGEDTDEWALANGYVSVVPCSYDLTAHQLLGQLNRDWKFIHE.

Positions 11, 12, 42, and 99 each coordinate a divalent metal cation.

Belongs to the SurE nucleotidase family. Requires a divalent metal cation as cofactor.

It is found in the cytoplasm. It carries out the reaction a ribonucleoside 5'-phosphate + H2O = a ribonucleoside + phosphate. In terms of biological role, nucleotidase that shows phosphatase activity on nucleoside 5'-monophosphates. The polypeptide is 5'-nucleotidase SurE (Cytophaga hutchinsonii (strain ATCC 33406 / DSM 1761 / CIP 103989 / NBRC 15051 / NCIMB 9469 / D465)).